Consider the following 132-residue polypeptide: Large ribosomal subunit protein eL8 (132 aa).

N6-acetyllysine; alternate is present on K8. K8 participates in a covalent cross-link: Glycyl lysine isopeptide (Lys-Gly) (interchain with G-Cter in SUMO2); alternate. A Glycyl lysine isopeptide (Lys-Gly) (interchain with G-Cter in SUMO2) cross-link involves residue K36. K128 carries the post-translational modification N6-acetyllysine.

Belongs to the eukaryotic ribosomal protein eL8 family. In terms of assembly, component of the large ribosomal subunit. Interacts with CRY1. Interacts with DICER1, AGO2, TARBP2, MOV10 and EIF6; they form a large RNA-induced silencing complex (RISC).

Its subcellular location is the cytoplasm. Its function is as follows. Component of the large ribosomal subunit. The ribosome is a large ribonucleoprotein complex responsible for the synthesis of proteins in the cell. This chain is Large ribosomal subunit protein eL8 (RPL7A), found in Sus scrofa (Pig).